The chain runs to 340 residues: Hydroxyurea phosphotransferase (340 aa).

The Proton acceptor role is filled by Asp240.

Belongs to the aminoglycoside phosphotransferase family.

Its function is as follows. Potential phosphotransferase that inactivates hydroxyurea by phosphorylation of the hydroxy group in the hydroxylamine moiety. This chain is Hydroxyurea phosphotransferase (hur), found in Kitasatospora aureofaciens (Streptomyces aureofaciens).